Here is a 414-residue protein sequence, read N- to C-terminus: Esterase FrsA (414 aa).

Belongs to the FrsA family.

The catalysed reaction is a carboxylic ester + H2O = an alcohol + a carboxylate + H(+). In terms of biological role, catalyzes the hydrolysis of esters. The protein is Esterase FrsA of Salmonella choleraesuis (strain SC-B67).